Here is a 300-residue protein sequence, read N- to C-terminus: Cation-efflux pump FieF (300 aa).

A helical membrane pass occupies residues 24–44; sequence LLIKIFAWWYTGSVSILAALV. Residues aspartate 45 and aspartate 49 each contribute to the Zn(2+) site. Helical transmembrane passes span 82 to 102 and 114 to 134; these read AALA…LTSI and PGVG…LVTF. Residues histidine 153 and aspartate 157 each coordinate Zn(2+). 2 consecutive transmembrane segments (helical) span residues 156–176 and 178–198; these read SDVM…YGWH and ADAL…LRMG.

The protein belongs to the cation diffusion facilitator (CDF) transporter (TC 2.A.4) family. FieF subfamily. In terms of assembly, homodimer.

It is found in the cell inner membrane. It catalyses the reaction Zn(2+)(in) + H(+)(out) = Zn(2+)(out) + H(+)(in). The catalysed reaction is Cd(2+)(in) + H(+)(out) = Cd(2+)(out) + H(+)(in). The enzyme catalyses Fe(2+)(in) + H(+)(out) = Fe(2+)(out) + H(+)(in). Its function is as follows. Divalent metal cation transporter which exports Zn(2+), Cd(2+) and possibly Fe(2+). May be involved in zinc and iron detoxification by efflux. This is Cation-efflux pump FieF from Salmonella choleraesuis (strain SC-B67).